We begin with the raw amino-acid sequence, 54 residues long: Apelin receptor early endogenous ligand (54 aa).

The first 25 residues, 1–25 (MRFQPLFWVFFIFAMSLLFITEEKS), serve as a signal peptide directing secretion.

The protein belongs to the Elabela/Toddler family. Interacts with APLNR.

The protein resides in the secreted. Its subcellular location is the extracellular space. Functionally, peptide hormone that functions as endogenous ligand for the G-protein-coupled apelin receptor (APLNR/APJ), that plays a role in the regulation of normal cardiovascular function and fluid homeostasis. Functions as a balanced agonist activating both G(i) protein pathway and beta-arrestin pathway of APLNR. Downstream G proteins activation, apelin can inhibit cAMP production and activate key intracellular effectors such as ERKs. On the other hand, APLNR activation induces beta-arrestin recruitment to the membrane leading to desensitization and internalization of the receptor. Required for mesendodermal differentiation, blood vessels formation and heart morphogenesis during early development and for adult cardiovascular homeostasis. Acts as a motogen by promoting mesendodermal cell migration during gastrulation by binding and activating APLNR. Acts as an early embryonic regulator of cellular movement with a role in migration and development of cardiac progenitor cells. May act as a chemoattractant for the activation of angioblast migration toward the embryonic midline, i.e. the position of the future vessel formation, during vasculogenesis. Positively regulates sinus venosus (SV)-derived endothelial cells migration into the developing heart to promote coronary blood vessel sprouting. Plays a role in placental vascular development; promotes placental trophoblast invasion and spiral artery remodeling in the uterus. Involved in the regulation of maternal cardiovascular homeostasis to prevent gestational hypertension and for potent cardioprotective functions during heart failure. Mediates myocardial contractility in an ERK1/2-dependent manner. The polypeptide is Apelin receptor early endogenous ligand (Rattus norvegicus (Rat)).